The sequence spans 364 residues: D-alanine--D-alanine ligase (364 aa).

The region spanning Arg-134 to Asn-347 is the ATP-grasp domain. An ATP-binding site is contributed by Ala-167–Glu-222. Residues Asp-300, Glu-314, and Asn-316 each contribute to the Mg(2+) site.

This sequence belongs to the D-alanine--D-alanine ligase family. Mg(2+) serves as cofactor. The cofactor is Mn(2+).

It is found in the cytoplasm. The catalysed reaction is 2 D-alanine + ATP = D-alanyl-D-alanine + ADP + phosphate + H(+). Its pathway is cell wall biogenesis; peptidoglycan biosynthesis. Its function is as follows. Cell wall formation. The protein is D-alanine--D-alanine ligase of Legionella pneumophila (strain Paris).